Consider the following 588-residue polypeptide: Hyaluronan synthase 1 (588 aa).

At Met-1–Arg-28 the chain is on the cytoplasmic side. Residues Ile-29–Glu-49 traverse the membrane as a helical segment. Over Phe-50 to Ser-61 the chain is Extracellular. The helical transmembrane segment at Leu-62–Leu-82 threads the bilayer. The Cytoplasmic portion of the chain corresponds to Glu-83 to Ser-411. Residues Phe-412–Trp-432 form a helical membrane-spanning segment. Asn-433 is a topological domain (extracellular). The chain crosses the membrane as a helical span at residues Val-434–Trp-454. The Cytoplasmic portion of the chain corresponds to Leu-455–Arg-456. A helical transmembrane segment spans residues Gly-457 to Pro-477. The Extracellular segment spans residues Ser-478–Pro-505. A helical transmembrane segment spans residues Ile-506 to Met-526. The Cytoplasmic segment spans residues Asp-527–His-543. Residues Leu-544–Val-564 form a helical membrane-spanning segment. Topologically, residues Trp-565–Val-588 are extracellular.

It belongs to the NodC/HAS family. Mg(2+) is required as a cofactor. Expression moves as a gradient through the embryo. The mRNA is first expressed in the animal region of the blastula, and by early gastrula is found everywhere except in the outer layer of the dorsal blastopore lip. By mid-gastrula, protein is present in the inner ectodermal layer and the endoderm, then disappears from dorsal ectoderm as the neural plate is induced and later decays in a dorsoventral direction. Last expressed in ventral regions of the gut at the tailbud stage (at protein level).

Its subcellular location is the membrane. The catalysed reaction is [hyaluronan](n) + UDP-N-acetyl-alpha-D-glucosamine = N-acetyl-beta-D-glucosaminyl-(1-&gt;4)-[hyaluronan](n) + UDP + H(+). The enzyme catalyses N-acetyl-beta-D-glucosaminyl-(1-&gt;4)-[hyaluronan](n) + UDP-alpha-D-glucuronate = [hyaluronan](n+1) + UDP + H(+). It participates in glycan biosynthesis; hyaluronan biosynthesis. Functionally, catalyzes the addition of GlcNAc or GlcUA monosaccharides to the nascent hyaluronan polymer. Therefore, it is essential to hyaluronan synthesis a major component of most extracellular matrices that has a structural role in tissues architectures and regulates cell adhesion, migration and differentiation. Also able to catalyze the synthesis of chito-oligosaccharide depending on the substrate. The protein is Hyaluronan synthase 1 (has1) of Xenopus laevis (African clawed frog).